The primary structure comprises 445 residues: Trimethylamine monooxygenase (445 aa).

Positions 14, 39, 41, 47, 48, and 64 each coordinate FAD. 2 residues coordinate NADP(+): W72 and N74. Positions 74 and 127 each coordinate FAD. Positions 204, 205, 207, and 228 each coordinate NADP(+). 2 residues coordinate FAD: Q317 and T320. Residue R411 coordinates NADP(+).

Belongs to the FMO family. FAD serves as cofactor.

The enzyme catalyses trimethylamine + NADPH + O2 = trimethylamine N-oxide + NADP(+) + H2O. Functionally, catalyzes the oxidation of trimethylamine (TMA) to produce trimethylamine N-oxide (TMAO). In vitro, has a broad substrate specificity, oxidizing many nitrogen- and sulfur-containing compounds, including dimethylamine (DMA), dimethylsulfide (DMS) and dimethylsulfoxide (DMSO). In Roseovarius sp. (strain 217), this protein is Trimethylamine monooxygenase.